A 347-amino-acid chain; its full sequence is 4-hydroxy-2-oxovalerate aldolase (347 aa).

One can recognise a Pyruvate carboxyltransferase domain in the interval Ile2–Met252. Residue Arg10–Asp11 participates in substrate binding. Asp11 lines the Mn(2+) pocket. The Proton acceptor role is filled by His14. Ser164 and His191 together coordinate substrate. Mn(2+) contacts are provided by His191 and His193.

The protein belongs to the 4-hydroxy-2-oxovalerate aldolase family.

It catalyses the reaction (S)-4-hydroxy-2-oxopentanoate = acetaldehyde + pyruvate. The protein is 4-hydroxy-2-oxovalerate aldolase (mhpE) of Burkholderia pseudomallei (strain 1710b).